The primary structure comprises 202 residues: Nuclear transcription factor Y subunit C-6 (202 aa).

Positions 1–16 (MAENNNNNGDNMNNDN) are enriched in low complexity. 2 disordered regions span residues 1-29 (MAEN…LPPM) and 180-202 (AWPA…GGGN). Polar residues predominate over residues 17–29 (HQQPPSYSQLPPM).

Belongs to the NFYC/HAP5 subunit family. Heterotrimeric transcription factor composed of three components, NF-YA, NF-YB and NF-YC. NF-YB and NF-YC must interact and dimerize for NF-YA association and DNA binding. Expressed in flowers and siliques.

The protein localises to the nucleus. In terms of biological role, stimulates the transcription of various genes by recognizing and binding to a CCAAT motif in promoters. The chain is Nuclear transcription factor Y subunit C-6 (NFYC6) from Arabidopsis thaliana (Mouse-ear cress).